A 396-amino-acid chain; its full sequence is DNA excision repair protein ERCC-8 (396 aa).

WD repeat units follow at residues 33–73 (NKDR…LYDL), 88–129 (CSIG…VWDT), 133–173 (QTAD…LCDL), 177–216 (SCSH…LWDV), 235–274 (QAVE…LWNS), 281–321 (LVNY…VYTV), and 325–363 (EQIT…AWVP). A disordered region spans residues 371–396 (DDDETTTKSQLNPAFEDAWSSSDEEG). Residues Ser-390, Ser-391, and Ser-392 each carry the phosphoserine modification.

As to quaternary structure, part of the CSA complex (also named DCX(ERCC8) complex), a DCX E3 ubiquitin-protein ligase complex containing ERCC8, RBX1, DDB1 and CUL4A; the CSA complex interacts with RNA polymerase II; upon UV irradiation it interacts with the COP9 signalosome and preferentially with the hyperphosphorylated form of RNA polymerase II. Interacts with ERCC6/CSB (via CIM motif); promoting recruitment to lesion-stalled RNA polymerase II (Pol II). Interacts with KIAA1530/UVSSA. Interacts with a subunit of RNA polymerase II TFIIH.

The protein resides in the nucleus. Its subcellular location is the chromosome. It localises to the nucleus matrix. The protein operates within protein modification; protein ubiquitination. Substrate-recognition component of the CSA complex, a DCX (DDB1-CUL4-X-box) E3 ubiquitin-protein ligase complex, involved in transcription-coupled nucleotide excision repair (TC-NER), a process during which RNA polymerase II-blocking lesions are rapidly removed from the transcribed strand of active genes. Following recruitment to lesion-stalled RNA polymerase II (Pol II), the CSA complex mediates ubiquitination of Pol II subunit POLR2A/RPB1 at 'Lys-1268', a critical TC-NER checkpoint, governing RNA Pol II stability and initiating DNA damage excision by TFIIH recruitment. The CSA complex also promotes the ubiquitination and subsequent proteasomal degradation of ERCC6/CSB in a UV-dependent manner; ERCC6 degradation is essential for the recovery of RNA synthesis after transcription-coupled repair. Also plays a role in DNA double-strand breaks (DSSBs) repair by non-homologous end joining (NHEJ). This Homo sapiens (Human) protein is DNA excision repair protein ERCC-8.